Reading from the N-terminus, the 224-residue chain is Viral late gene transcription factor 3 (224 aa).

A zinc finger lies at 6-26; the sequence is CSGCRHNGIVSEQGYEYCIFC.

This sequence belongs to the orthopoxvirus VLTF-3/OPG127 family. As to quaternary structure, interacts with the late transcription elongation factor VLTF-4/OPG110. Interacts with the late transcription factors VLTF-1/OPG093.

Functionally, acts with RNA polymerase to initiate transcription from late gene promoters. This chain is Viral late gene transcription factor 3 (OPG127), found in Vaccinia virus (strain Ankara) (VACV).